A 301-amino-acid chain; its full sequence is MKLKVTGAGINQVVTLKQDATLNDLIEHINVDVKTMRFGYPPQRINLQGEDASLGQTQLDELGINSGEKITIESSDSNESFSLPPPQPKPKRVLKSTEMSIGGSGENVLSVHPVLDDNSCLFHAIAYGIFKQDSVRDLREMVSKEVLNNPVKFNDAILDKPNKDYAQWILKMESWGGAIEIGIISDALAVAIYVVDIDAVKIEKFNEDKFDNYILILFNGIHYDSLTMNEFKTVFNKNQPESDDVLTAALQLASNLKQTGYSFNTHKAQIKCNTCQMTFVGEREVARHAESTGHVDFGQNR.

Positions 4-80 are UBX-like; the sequence is KVTGAGINQV…TIESSDSNES (77 aa). One can recognise an OTU domain in the interval 109-229; it reads LSVHPVLDDN…GIHYDSLTMN (121 aa). The segment at 114-120 is cys-loop; it reads VLDDNSC. Asp117 is a catalytic residue. Cys120 acts as the Nucleophile in catalysis. A Glycyl lysine isopeptide (Lys-Gly) (interchain with G-Cter in ubiquitin) cross-link involves residue Lys160. The tract at residues 169–179 is variable-loop; it reads ILKMESWGGAI. The tract at residues 218 to 222 is his-loop; the sequence is FNGIH. Ile221 serves as a coordination point for substrate. His222 is a catalytic residue. Residues 243–248 are S2 site; that stretch reads DDVLTA. Residues 270–294 form a C2H2-type zinc finger; the sequence is IKCNTCQMTFVGEREVARHAESTGH. Residue His294 is part of the active site.

In terms of assembly, forms a complex composed of CDC48, NPL4, UFD1, DOA1, SHP1 and deubiquitinase OTU1; within the complex interacts with CDC48 and DOA1/UFD3.

Its subcellular location is the cytoplasm. It is found in the nucleus. It carries out the reaction Thiol-dependent hydrolysis of ester, thioester, amide, peptide and isopeptide bonds formed by the C-terminal Gly of ubiquitin (a 76-residue protein attached to proteins as an intracellular targeting signal).. Its function is as follows. Hydrolase that can remove conjugated ubiquitin from proteins and may therefore play an important regulatory role at the level of protein turnover by preventing degradation. Participates in the regulation of the ubiquitin conjugation pathway involving CDC48 by hindering multiubiquitination of substrates at the CDC48 chaperone. May be indirectly involved in PIS1 gene expression. This Saccharomyces cerevisiae (strain ATCC 204508 / S288c) (Baker's yeast) protein is Ubiquitin thioesterase OTU1 (OTU1).